A 226-amino-acid chain; its full sequence is ADP-ribosylation factor-like protein 6-interacting protein 6 (226 aa).

The interval 1-49 (MSFVESWRFAGARRRRQVTPGPATRPGYSDYTQGDSWGEGEGDEDEGCD) is disordered. Residues Ser2 and Ser36 each carry the phosphoserine modification. Acidic residues predominate over residues 38 to 48 (GEGEGDEDEGC). Phosphoserine occurs at positions 60, 65, and 80. 3 consecutive transmembrane segments (helical) span residues 111–131 (ILCS…AYMI), 150–170 (LLGF…CCSF), and 205–225 (MGYS…AWCL).

The protein belongs to the ARL6IP6 family.

Its subcellular location is the nucleus inner membrane. The polypeptide is ADP-ribosylation factor-like protein 6-interacting protein 6 (Arl6ip6) (Mus musculus (Mouse)).